A 944-amino-acid chain; its full sequence is Isoleucine--tRNA ligase (944 aa).

A 'HIGH' region motif is present at residues 58–68 (PYANGSIHIGH). E563 serves as a coordination point for L-isoleucyl-5'-AMP. The 'KMSKS' region signature appears at 604–608 (KMSKS). K607 contributes to the ATP binding site. Zn(2+)-binding residues include C907, C910, C927, and C930.

The protein belongs to the class-I aminoacyl-tRNA synthetase family. IleS type 1 subfamily. Monomer. Zn(2+) serves as cofactor.

The protein resides in the cytoplasm. The catalysed reaction is tRNA(Ile) + L-isoleucine + ATP = L-isoleucyl-tRNA(Ile) + AMP + diphosphate. Catalyzes the attachment of isoleucine to tRNA(Ile). As IleRS can inadvertently accommodate and process structurally similar amino acids such as valine, to avoid such errors it has two additional distinct tRNA(Ile)-dependent editing activities. One activity is designated as 'pretransfer' editing and involves the hydrolysis of activated Val-AMP. The other activity is designated 'posttransfer' editing and involves deacylation of mischarged Val-tRNA(Ile). The chain is Isoleucine--tRNA ligase from Salmonella typhimurium (strain LT2 / SGSC1412 / ATCC 700720).